A 1146-amino-acid chain; its full sequence is Cell division cycle and apoptosis regulator protein 1 (1146 aa).

Residues 1 to 246 form an interaction with AR region; it reads MAQFGGQKNP…AQPQPQSLLQ (246 aa). Residues 200-657 form an interaction with GATA2 region; that stretch reads QRIQTLPNQN…RALSSKGLKS (458 aa). The disordered stretch occupies residues 282–351; that stretch reads IVSQPQPARR…RRERERSPRR (70 aa). Composition is skewed to basic and acidic residues over residues 290–331 and 338–349; these read RRLD…ERSP and ERSPRRERERSP. Serine 453 bears the Phosphoserine mark. Positions 591–615 form a coiled coil; it reads KQQLVEKLQGERKKADGEQDEEEKD. The tract at residues 599-635 is disordered; the sequence is QGERKKADGEQDEEEKDDGEVKEIATPTHWSKLDPKA. The segment covering 608 to 618 has biased composition (acidic residues); sequence EQDEEEKDDGE. Threonine 624 bears the Phosphothreonine mark. Residues 633 to 667 form the SAP domain; sequence PKAMKVNDLRKELESRALSSKGLKSQLIARLTKQL. Lysine 634 is covalently cross-linked (Glycyl lysine isopeptide (Lys-Gly) (interchain with G-Cter in ubiquitin)). The tract at residues 640–1146 is interaction with GATA1; it reads DLRKELESRA…EKSKENGSGV (507 aa). The residue at position 664 (threonine 664) is a Phosphothreonine. Composition is skewed to basic and acidic residues over residues 671–684, 691–716, 793–814, and 829–852; these read EQKE…KSEK, DKKS…RQER, KEDK…KKEE, and SGDD…KDDS. Disordered regions lie at residues 671–716 and 793–912; these read EQKE…RQER and KEDK…KEKP. Phosphoserine is present on residues serine 682 and serine 694. A compositionally biased stretch (acidic residues) spans 853 to 884; sequence KDDDETEEDNNQDEYDPMEAEEAEDEDDDREE. A Phosphothreonine modification is found at threonine 858. Over residues 885–912 the composition is skewed to basic and acidic residues; that stretch reads EEVKRDDKRDVSRYCKDRPAKDKEKEKP. Lysine 1008 participates in a covalent cross-link: Glycyl lysine isopeptide (Lys-Gly) (interchain with G-Cter in SUMO1); alternate. Lysine 1008 participates in a covalent cross-link: Glycyl lysine isopeptide (Lys-Gly) (interchain with G-Cter in SUMO2); alternate. Positions 1029 to 1110 form a coiled coil; that stretch reads DVGSLLQKLE…LQFENQLNKT (82 aa). Residues lysine 1063 and lysine 1131 each participate in a glycyl lysine isopeptide (Lys-Gly) (interchain with G-Cter in SUMO2) cross-link.

Directly interacts with ESR1, NR3C1 and p53/TP53. Interacts (via N-terminus) with CALCOCO1. Interacts with MED1 and GATA1. Interacts with AR and GATA2.

The protein resides in the cytoplasm. The protein localises to the perinuclear region. In terms of biological role, associates with components of the Mediator and p160 coactivator complexes that play a role as intermediaries transducing regulatory signals from upstream transcriptional activator proteins to basal transcription machinery at the core promoter. Recruited to endogenous nuclear receptor target genes in response to the appropriate hormone. Also functions as a p53 coactivator. May thus play an important role in transcriptional regulation. May be involved in apoptosis signaling in the presence of the retinoid CD437. Apoptosis induction involves sequestration of 14-3-3 protein(s) and mediated altered expression of multiple cell cycle regulatory genes including MYC, CCNB1 and CDKN1A. Plays a role in cell cycle progression and/or cell proliferation. In association with CALCOCO1 enhances GATA1- and MED1-mediated transcriptional activation from the gamma-globin promoter during erythroid differentiation of K562 erythroleukemia cells. Can act as a both a coactivator and corepressor of AR-mediated transcription. Contributes to chromatin looping and AR transcription complex assembly by stabilizing AR-GATA2 association on chromatin and facilitating MED1 and RNA polymerase II recruitment to AR-binding sites. May play an important role in the growth and tumorigenesis of prostate cancer cells. The chain is Cell division cycle and apoptosis regulator protein 1 (Ccar1) from Mus musculus (Mouse).